We begin with the raw amino-acid sequence, 339 residues long: Aspartate carbamoyltransferase catalytic subunit (339 aa).

2 residues coordinate carbamoyl phosphate: R69 and T70. K97 contributes to the L-aspartate binding site. R119, H149, and Q152 together coordinate carbamoyl phosphate. L-aspartate contacts are provided by R182 and R237. G278 and P279 together coordinate carbamoyl phosphate.

It belongs to the aspartate/ornithine carbamoyltransferase superfamily. ATCase family. As to quaternary structure, heterododecamer (2C3:3R2) of six catalytic PyrB chains organized as two trimers (C3), and six regulatory PyrI chains organized as three dimers (R2).

It catalyses the reaction carbamoyl phosphate + L-aspartate = N-carbamoyl-L-aspartate + phosphate + H(+). Its pathway is pyrimidine metabolism; UMP biosynthesis via de novo pathway; (S)-dihydroorotate from bicarbonate: step 2/3. In terms of biological role, catalyzes the condensation of carbamoyl phosphate and aspartate to form carbamoyl aspartate and inorganic phosphate, the committed step in the de novo pyrimidine nucleotide biosynthesis pathway. The sequence is that of Aspartate carbamoyltransferase catalytic subunit from Hydrogenovibrio crunogenus (strain DSM 25203 / XCL-2) (Thiomicrospira crunogena).